We begin with the raw amino-acid sequence, 275 residues long: MTLNKCNPTTPSRRHTVKVVNNKLYKGKSFFKLTKSLNKSGGRNNQGRITTRHIGGRHKRKYRLIDFKRNKDDILAKVKRLEYDPNRSSNIALISYEDGEMRYILEAKGLKIGDKVQSGINAPIKIGNALPIKMFPFGSILHNIEIKPGKGGQIARSAGSYAQVVTHEKNYVIVKLRSGEIRKIFSECKATFGEVGNSEYMLKSLGKAGANRWRGIRPTVRGTAMNPIDHPHGGGEGKNFGKHPVSPWGVQSKGKKTRKNKRTEKYILYNRKYKK.

The disordered stretch occupies residues 221–275; the sequence is RGTAMNPIDHPHGGGEGKNFGKHPVSPWGVQSKGKKTRKNKRTEKYILYNRKYKK. Basic residues predominate over residues 253–262; it reads KGKKTRKNKR.

Belongs to the universal ribosomal protein uL2 family. Part of the 50S ribosomal subunit. Forms a bridge to the 30S subunit in the 70S ribosome.

One of the primary rRNA binding proteins. Required for association of the 30S and 50S subunits to form the 70S ribosome, for tRNA binding and peptide bond formation. It has been suggested to have peptidyltransferase activity; this is somewhat controversial. Makes several contacts with the 16S rRNA in the 70S ribosome. This Wigglesworthia glossinidia brevipalpis protein is Large ribosomal subunit protein uL2.